A 294-amino-acid polypeptide reads, in one-letter code: Protoheme IX farnesyltransferase (294 aa).

Helical transmembrane passes span 13 to 33 (IIFG…KGVI), 35 to 55 (YPLF…GCVF), 84 to 104 (ISLI…YAAA), 107 to 127 (LAMQ…SLYM), 132 to 152 (VYGT…GYCA), 162 to 182 (LILL…IAIF), 208 to 228 (IILY…SGYA), 229 to 249 (GYKY…MALS), and 264 to 284 (FIFS…DPHV).

This sequence belongs to the UbiA prenyltransferase family. Protoheme IX farnesyltransferase subfamily.

The protein resides in the cell inner membrane. The enzyme catalyses heme b + (2E,6E)-farnesyl diphosphate + H2O = Fe(II)-heme o + diphosphate. The protein operates within porphyrin-containing compound metabolism; heme O biosynthesis; heme O from protoheme: step 1/1. Converts heme B (protoheme IX) to heme O by substitution of the vinyl group on carbon 2 of heme B porphyrin ring with a hydroxyethyl farnesyl side group. This chain is Protoheme IX farnesyltransferase, found in Photorhabdus laumondii subsp. laumondii (strain DSM 15139 / CIP 105565 / TT01) (Photorhabdus luminescens subsp. laumondii).